The following is a 471-amino-acid chain: 6-phosphofructo-2-kinase/fructose-2,6-bisphosphatase 1 (471 aa).

An N-acetylserine modification is found at serine 2. The tract at residues 2–250 (SQEMGELTQT…VYYLMNIHVT (249 aa)) is 6-phosphofructo-2-kinase. Serine 33 carries the post-translational modification Phosphoserine; by PKA. 49 to 57 (GLPARGKTY) is a binding site for ATP. Arginine 82 and arginine 105 together coordinate beta-D-fructose 6-phosphate. Residue aspartate 131 is part of the active site. 2 residues coordinate beta-D-fructose 6-phosphate: threonine 133 and arginine 139. A Phosphoserine modification is found at serine 141. The active site involves cysteine 161. 170-175 (NIRQVK) is an ATP binding site. Lysine 175, arginine 196, and tyrosine 200 together coordinate beta-D-fructose 6-phosphate. The interval 251 to 471 (PRSIYLCRHG…EALDTVPAHY (221 aa)) is fructose-2,6-bisphosphatase. Arginine 258 contributes to the beta-D-fructose 2,6-bisphosphate binding site. Histidine 259 acts as the Tele-phosphohistidine intermediate in catalysis. Beta-D-fructose 2,6-bisphosphate is bound by residues asparagine 265, glycine 271, and arginine 308. The Proton donor/acceptor role is filled by glutamate 328. Residues tyrosine 339, arginine 353, lysine 357, tyrosine 368, glutamine 394, and arginine 398 each coordinate beta-D-fructose 2,6-bisphosphate. An ATP-binding site is contributed by 350–353 (FALR). Residues 394–398 (QAVMR) and tyrosine 430 contribute to the ATP site.

This sequence in the C-terminal section; belongs to the phosphoglycerate mutase family. In terms of assembly, homodimer. As to expression, liver.

It catalyses the reaction beta-D-fructose 2,6-bisphosphate + H2O = beta-D-fructose 6-phosphate + phosphate. It carries out the reaction beta-D-fructose 6-phosphate + ATP = beta-D-fructose 2,6-bisphosphate + ADP + H(+). With respect to regulation, phosphorylation at Ser-33 inhibits the kinase and activates the bisphosphatase. In terms of biological role, synthesis and degradation of fructose 2,6-bisphosphate. The protein is 6-phosphofructo-2-kinase/fructose-2,6-bisphosphatase 1 of Bos taurus (Bovine).